The primary structure comprises 367 residues: Putative heat shock 70 kDa protein 7 (367 aa).

The protein belongs to the heat shock protein 70 family.

This Homo sapiens (Human) protein is Putative heat shock 70 kDa protein 7 (HSPA7).